Consider the following 283-residue polypeptide: Elongation factor Ts (283 aa).

The involved in Mg(2+) ion dislocation from EF-Tu stretch occupies residues 80-83; that stretch reads TDFV.

The protein belongs to the EF-Ts family.

It localises to the cytoplasm. Associates with the EF-Tu.GDP complex and induces the exchange of GDP to GTP. It remains bound to the aminoacyl-tRNA.EF-Tu.GTP complex up to the GTP hydrolysis stage on the ribosome. This chain is Elongation factor Ts, found in Haemophilus influenzae (strain PittGG).